The chain runs to 239 residues: 1-(5-phosphoribosyl)-5-[(5-phosphoribosylamino)methylideneamino] imidazole-4-carboxamide isomerase (239 aa).

Catalysis depends on aspartate 8, which acts as the Proton acceptor. Aspartate 129 serves as the catalytic Proton donor.

Belongs to the HisA/HisF family.

It is found in the cytoplasm. It carries out the reaction 1-(5-phospho-beta-D-ribosyl)-5-[(5-phospho-beta-D-ribosylamino)methylideneamino]imidazole-4-carboxamide = 5-[(5-phospho-1-deoxy-D-ribulos-1-ylimino)methylamino]-1-(5-phospho-beta-D-ribosyl)imidazole-4-carboxamide. The protein operates within amino-acid biosynthesis; L-histidine biosynthesis; L-histidine from 5-phospho-alpha-D-ribose 1-diphosphate: step 4/9. The polypeptide is 1-(5-phosphoribosyl)-5-[(5-phosphoribosylamino)methylideneamino] imidazole-4-carboxamide isomerase (Cereibacter sphaeroides (strain ATCC 17029 / ATH 2.4.9) (Rhodobacter sphaeroides)).